Consider the following 434-residue polypeptide: Beta-enolase (434 aa).

Ser-2 is subject to N-acetylserine. Residues His-158 and Glu-167 each coordinate substrate. Glu-210 serves as the catalytic Proton donor. Residues Asp-245, Glu-293, and Asp-318 each coordinate Mg(2+). Substrate-binding residues include Glu-293 and Asp-318. The active-site Proton acceptor is the Lys-343. Residues 370 to 373 and Lys-394 contribute to the substrate site; that span reads SHRS.

The protein belongs to the enolase family. Homodimer. Interacts with PNKD. Requires Mg(2+) as cofactor.

It localises to the cytoplasm. It catalyses the reaction (2R)-2-phosphoglycerate = phosphoenolpyruvate + H2O. Its pathway is carbohydrate degradation; glycolysis; pyruvate from D-glyceraldehyde 3-phosphate: step 4/5. In terms of biological role, glycolytic enzyme that catalyzes the conversion of 2-phosphoglycerate to phosphoenolpyruvate. In Gallus gallus (Chicken), this protein is Beta-enolase (ENO3).